The chain runs to 216 residues: SPbeta prophage-derived uncharacterized protein YomX (216 aa).

This Bacillus subtilis (strain 168) protein is SPbeta prophage-derived uncharacterized protein YomX (yomX).